The primary structure comprises 476 residues: Glycogen synthase (476 aa).

Residue lysine 15 coordinates ADP-alpha-D-glucose.

The protein belongs to the glycosyltransferase 1 family. Bacterial/plant glycogen synthase subfamily.

It catalyses the reaction [(1-&gt;4)-alpha-D-glucosyl](n) + ADP-alpha-D-glucose = [(1-&gt;4)-alpha-D-glucosyl](n+1) + ADP + H(+). Its pathway is glycan biosynthesis; glycogen biosynthesis. In terms of biological role, synthesizes alpha-1,4-glucan chains using ADP-glucose. The protein is Glycogen synthase of Bacillus anthracis.